The primary structure comprises 161 residues: Pupal cuticle protein C1B (161 aa).

9 repeat units span residues 6–9 (AAPA), 14–17 (AAPA), 35–38 (AAPA), 87–90 (AAPV), 103–106 (AAPV), 112–115 (AAPV), 121–124 (AAPV), 130–133 (AAPV), and 143–146 (AAPA).

In terms of biological role, component of the cuticle of the pupa of Tenebrio molitor. The sequence is that of Pupal cuticle protein C1B from Tenebrio molitor (Yellow mealworm beetle).